Reading from the N-terminus, the 43-residue chain is Lanthionine-containing peptide SapB (43 aa).

Positions 1 to 21 are cleaved as a signal peptide; the sequence is MALLDLQAMDTPAEDSFGELA. 2 consecutive cross-links (lanthionine (Ser-Cys)) follow at residues 24 to 31 and 34 to 41; these read SQVSLLVC and SSLSVVLC. 2,3-didehydroalanine (Ser) occurs at positions 27 and 37.

The protein belongs to the lanthionine-containing morphogen protein family. Post-translationally, maturation involves the enzymatic conversion of Ser into dehydrated AA and the formation of thioether bonds with cysteine. This is followed by membrane translocation and cleavage of the modified precursor.

In terms of biological role, lanthionine-containing peptide devoid of antibiotic properties, involved in the formation of aerial mycelium. Suggested to self-assemble at air-water interfaces, thus providing a film of surfactant through which nascent aerial hyphae can emerge. The aerial hyphae differentiate further into spores. The protein is Lanthionine-containing peptide SapB (ramS) of Streptomyces griseus subsp. griseus (strain JCM 4626 / CBS 651.72 / NBRC 13350 / KCC S-0626 / ISP 5235).